The following is a 706-amino-acid chain: Elongation factor G 1 (706 aa).

A tr-type G domain is found at N8–T290. GTP contacts are provided by residues A17–T24, D88–H92, and N142–D145.

Belongs to the TRAFAC class translation factor GTPase superfamily. Classic translation factor GTPase family. EF-G/EF-2 subfamily.

The protein localises to the cytoplasm. Catalyzes the GTP-dependent ribosomal translocation step during translation elongation. During this step, the ribosome changes from the pre-translocational (PRE) to the post-translocational (POST) state as the newly formed A-site-bound peptidyl-tRNA and P-site-bound deacylated tRNA move to the P and E sites, respectively. Catalyzes the coordinated movement of the two tRNA molecules, the mRNA and conformational changes in the ribosome. The protein is Elongation factor G 1 of Pseudomonas aeruginosa (strain ATCC 15692 / DSM 22644 / CIP 104116 / JCM 14847 / LMG 12228 / 1C / PRS 101 / PAO1).